The primary structure comprises 262 residues: Small ribosomal subunit protein eS1 (262 aa).

This sequence belongs to the eukaryotic ribosomal protein eS1 family. In terms of assembly, component of the small ribosomal subunit. Mature ribosomes consist of a small (40S) and a large (60S) subunit. The 40S subunit contains about 33 different proteins and 1 molecule of RNA (18S). The 60S subunit contains about 49 different proteins and 3 molecules of RNA (25S, 5.8S and 5S).

The protein localises to the cytoplasm. The chain is Small ribosomal subunit protein eS1 from Cryptosporidium hominis.